Here is a 263-residue protein sequence, read N- to C-terminus: Imidazole glycerol phosphate synthase subunit HisF (263 aa).

Residues D11 and D130 contribute to the active site.

It belongs to the HisA/HisF family. In terms of assembly, heterodimer of HisH and HisF.

It is found in the cytoplasm. It catalyses the reaction 5-[(5-phospho-1-deoxy-D-ribulos-1-ylimino)methylamino]-1-(5-phospho-beta-D-ribosyl)imidazole-4-carboxamide + L-glutamine = D-erythro-1-(imidazol-4-yl)glycerol 3-phosphate + 5-amino-1-(5-phospho-beta-D-ribosyl)imidazole-4-carboxamide + L-glutamate + H(+). The protein operates within amino-acid biosynthesis; L-histidine biosynthesis; L-histidine from 5-phospho-alpha-D-ribose 1-diphosphate: step 5/9. Its function is as follows. IGPS catalyzes the conversion of PRFAR and glutamine to IGP, AICAR and glutamate. The HisF subunit catalyzes the cyclization activity that produces IGP and AICAR from PRFAR using the ammonia provided by the HisH subunit. The sequence is that of Imidazole glycerol phosphate synthase subunit HisF from Herpetosiphon aurantiacus (strain ATCC 23779 / DSM 785 / 114-95).